A 320-amino-acid polypeptide reads, in one-letter code: Nicotianamine synthase 1 (320 aa).

This sequence belongs to the nicotianamine synthase (NAS)-like family. As to expression, in shoots and roots.

The enzyme catalyses 3 S-adenosyl-L-methionine = nicotianamine + 3 S-methyl-5'-thioadenosine + 3 H(+). In terms of biological role, synthesizes nicotianamine, a polyamine which serves as a sensor for the physiological iron status within the plant, and/or might be involved in the transport of iron. This Arabidopsis thaliana (Mouse-ear cress) protein is Nicotianamine synthase 1 (NAS1).